The primary structure comprises 669 residues: Dymeclin (669 aa).

Gly-2 carries the N-myristoyl glycine lipid modification.

Belongs to the dymeclin family. In terms of processing, myristoylated in vitro; myristoylation is not essential for protein targeting to Golgi compartment.

The protein localises to the cytoplasm. The protein resides in the golgi apparatus. Functionally, necessary for correct organization of Golgi apparatus. This chain is Dymeclin (dym), found in Xenopus laevis (African clawed frog).